A 1370-amino-acid polypeptide reads, in one-letter code: DNA-directed RNA polymerase subunit beta (1370 aa).

The protein belongs to the RNA polymerase beta chain family. The RNAP catalytic core consists of 2 alpha, 1 beta, 1 beta' and 1 omega subunit. When a sigma factor is associated with the core the holoenzyme is formed, which can initiate transcription.

The catalysed reaction is RNA(n) + a ribonucleoside 5'-triphosphate = RNA(n+1) + diphosphate. Its function is as follows. DNA-dependent RNA polymerase catalyzes the transcription of DNA into RNA using the four ribonucleoside triphosphates as substrates. This Geobacter metallireducens (strain ATCC 53774 / DSM 7210 / GS-15) protein is DNA-directed RNA polymerase subunit beta.